The chain runs to 106 residues: Met repressor (106 aa).

This sequence belongs to the MetJ family. Homodimer.

It localises to the cytoplasm. This regulatory protein, when combined with SAM (S-adenosylmethionine) represses the expression of the methionine regulon and of enzymes involved in SAM synthesis. The chain is Met repressor from Vibrio atlanticus (strain LGP32) (Vibrio splendidus (strain Mel32)).